A 445-amino-acid chain; its full sequence is Maltoporin (445 aa).

An N-terminal signal peptide occupies residues 1–25 (MKMKAKWLPIAAGVTAALASQAAFA).

It belongs to the porin LamB (TC 1.B.3) family. As to quaternary structure, homotrimer formed of three 18-stranded antiparallel beta-barrels, containing three independent channels.

It is found in the cell outer membrane. The catalysed reaction is beta-maltose(in) = beta-maltose(out). Functionally, involved in the transport of maltose and maltodextrins. This is Maltoporin from Aeromonas salmonicida.